Reading from the N-terminus, the 614-residue chain is UvrABC system protein C (614 aa).

Residues 20–98 (TAPGVYRMYA…IKSLSPRYNV (79 aa)) enclose the GIY-YIG domain. The UVR domain occupies 207–242 (DELTRELGEQMQAASEALEFEQAARLRDLISSLRSM).

Belongs to the UvrC family. Interacts with UvrB in an incision complex.

It localises to the cytoplasm. Its function is as follows. The UvrABC repair system catalyzes the recognition and processing of DNA lesions. UvrC both incises the 5' and 3' sides of the lesion. The N-terminal half is responsible for the 3' incision and the C-terminal half is responsible for the 5' incision. The protein is UvrABC system protein C of Stenotrophomonas maltophilia (strain R551-3).